The primary structure comprises 436 residues: GTPase Der (436 aa).

2 EngA-type G domains span residues N4–S165 and F172–E347. Residues G10–S17, D57–I61, N119–D122, G178–S185, D225–I229, and N290–D293 contribute to the GTP site. Residues R348 to S432 enclose the KH-like domain.

Belongs to the TRAFAC class TrmE-Era-EngA-EngB-Septin-like GTPase superfamily. EngA (Der) GTPase family. In terms of assembly, associates with the 50S ribosomal subunit.

In terms of biological role, GTPase that plays an essential role in the late steps of ribosome biogenesis. This Mycoplasmopsis agalactiae (strain NCTC 10123 / CIP 59.7 / PG2) (Mycoplasma agalactiae) protein is GTPase Der.